We begin with the raw amino-acid sequence, 165 residues long: ATP synthase subunit b (165 aa).

Residues 7–27 (GTSLGNLLIVTGSFILLLLLV) traverse the membrane as a helical segment.

The protein belongs to the ATPase B chain family. As to quaternary structure, F-type ATPases have 2 components, F(1) - the catalytic core - and F(0) - the membrane proton channel. F(1) has five subunits: alpha(3), beta(3), gamma(1), delta(1), epsilon(1). F(0) has three main subunits: a(1), b(2) and c(10-14). The alpha and beta chains form an alternating ring which encloses part of the gamma chain. F(1) is attached to F(0) by a central stalk formed by the gamma and epsilon chains, while a peripheral stalk is formed by the delta and b chains.

Its subcellular location is the cell membrane. Functionally, f(1)F(0) ATP synthase produces ATP from ADP in the presence of a proton or sodium gradient. F-type ATPases consist of two structural domains, F(1) containing the extramembraneous catalytic core and F(0) containing the membrane proton channel, linked together by a central stalk and a peripheral stalk. During catalysis, ATP synthesis in the catalytic domain of F(1) is coupled via a rotary mechanism of the central stalk subunits to proton translocation. In terms of biological role, component of the F(0) channel, it forms part of the peripheral stalk, linking F(1) to F(0). The chain is ATP synthase subunit b from Streptococcus mutans serotype c (strain ATCC 700610 / UA159).